The chain runs to 727 residues: Cadmium-transporting ATPase (727 aa).

The 64-residue stretch at 12-75 (EMNVYRVQGF…AGAFENLKVS (64 aa)) folds into the HMA domain. Positions 23 and 26 each coordinate Cd(2+). A run of 5 helical transmembrane segments spans residues 106-126 (STLLFATLLIAFGYLSHFVNG), 130-150 (LVTSMLFVGSIVIGGYSLFKV), 171-191 (IGATIIGKWAEASIVVILFAI), 336-356 (IIMVIAALVAVVPPLFFGGSW), and 364-384 (LAVLVVGCPCALVISTPISIV). The 4-aspartylphosphate intermediate role is filled by D415. Helical transmembrane passes span 672 to 694 (LNIIKANITFAIGIKIIALLLVI) and 699 to 721 (TLWIAILSDMGATILVALNSLRL).

The protein belongs to the cation transport ATPase (P-type) (TC 3.A.3) family. Type IB subfamily.

It localises to the cell membrane. It catalyses the reaction Cd(2+)(in) + ATP + H2O = Cd(2+)(out) + ADP + phosphate + H(+). With respect to regulation, inhibited by the antibiotic bafilomycin A1. Partially inhibited by DCCD, nigericin and FCCP. Its function is as follows. Couples the hydrolysis of ATP with the export of cadmium. Involved in cadmium resistance. The chain is Cadmium-transporting ATPase from Staphylococcus aureus.